The primary structure comprises 353 residues: COMPASS component SPP1 (353 aa).

The PHD-type zinc finger occupies 22 to 72 (DVYCICKRPDYGELMVGCDGCDDWFHFTCLHIPEQFKDLVFSFYCPYCQAG). Zn(2+) contacts are provided by Cys25, Cys27, Cys39, Cys42, His47, Cys50, Cys66, and Cys69. Residues 83–124 (NGEGSLPKTLWKRKCRISDCYKPCLQDSKYCSEEHGREFVND) are non coventional C3H-type zinc finger. A Phosphoserine modification is found at Ser87. Residues Cys97, Cys102, Cys113, and His117 each coordinate Zn(2+). The span at 235–244 (VECGKEDSKG) shows a compositional bias: basic and acidic residues. The tract at residues 235–255 (VECGKEDSKGTKRKKKKNSSR) is disordered. The span at 245-255 (TKRKKKKNSSR) shows a compositional bias: basic residues.

As to quaternary structure, component of the Set1C/COMPASS complex which consists of SET1(2), BRE2(2), SPP1(2), SDC1(1), SHG1(1), SWD1(1), SWD2(1), and SWD3(1).

The protein resides in the nucleus. Component of the Set1C/COMPASS complex that specifically mono-, di- and trimethylates histone H3 to form H3K4me1/2/3, which subsequently plays a role in telomere length maintenance and transcription elongation regulation. COMPASS recognizes ubiquitinated H2B on one face of the nucleosome which stimulates the methylation of H3 on the opposing face. SPP1/CPS40 can recognize methylated histone lysine residue H3K4me3 or unmethylated H3K4. Stimulates the RNA binding activity of SET1. This is COMPASS component SPP1 from Saccharomyces cerevisiae (strain ATCC 204508 / S288c) (Baker's yeast).